The primary structure comprises 291 residues: N-acetylmannosamine kinase (291 aa).

ATP is bound by residues 5 to 12 and 132 to 139; these read AIDIGGTK and GVGGGVVS. Zn(2+) is bound by residues His156, Cys166, Cys168, and Cys173.

The protein belongs to the ROK (NagC/XylR) family. NanK subfamily. Homodimer.

It carries out the reaction an N-acyl-D-mannosamine + ATP = an N-acyl-D-mannosamine 6-phosphate + ADP + H(+). Its pathway is amino-sugar metabolism; N-acetylneuraminate degradation; D-fructose 6-phosphate from N-acetylneuraminate: step 2/5. Functionally, catalyzes the phosphorylation of N-acetylmannosamine (ManNAc) to ManNAc-6-P. The chain is N-acetylmannosamine kinase from Escherichia coli O6:K15:H31 (strain 536 / UPEC).